Consider the following 170-residue polypeptide: Putative calmodulin-like protein 6 (170 aa).

EF-hand domains lie at 8–43, 44–79, 84–119, and 120–155; these read QQISDFRDAFSLFDKNNDGCISREELATVLTRLGMA, PSQEDLQDMIVAVDEDGNGTIEFDEFLAIMKKKLYE, DDEEELRKAFRIFDKDDNGFISRNELSMVMASLGEE, and MTEDEIDDMMKAADSNNDGQVDYEEFKRVMMSTWNI. Residues D21, N23, D25, C27, E32, D57, D59, N61, T63, E68, D97, D99, N101, E108, D133, N135, D137, Q139, and E144 each coordinate Ca(2+).

Belongs to the calmodulin family.

Potential calcium sensor. In Oryza sativa subsp. japonica (Rice), this protein is Putative calmodulin-like protein 6 (CML6).